We begin with the raw amino-acid sequence, 251 residues long: Hydroxyacylglutathione hydrolase (251 aa).

Zn(2+) is bound by residues H53, H55, D57, H58, H110, D127, and H165.

It belongs to the metallo-beta-lactamase superfamily. Glyoxalase II family. In terms of assembly, monomer. It depends on Zn(2+) as a cofactor.

The catalysed reaction is an S-(2-hydroxyacyl)glutathione + H2O = a 2-hydroxy carboxylate + glutathione + H(+). Its pathway is secondary metabolite metabolism; methylglyoxal degradation; (R)-lactate from methylglyoxal: step 2/2. In terms of biological role, thiolesterase that catalyzes the hydrolysis of S-D-lactoyl-glutathione to form glutathione and D-lactic acid. The polypeptide is Hydroxyacylglutathione hydrolase (Escherichia coli (strain SE11)).